Consider the following 151-residue polypeptide: Large ribosomal subunit protein bL9 (151 aa).

Belongs to the bacterial ribosomal protein bL9 family.

Binds to the 23S rRNA. The sequence is that of Large ribosomal subunit protein bL9 from Chlorobium phaeovibrioides (strain DSM 265 / 1930) (Prosthecochloris vibrioformis (strain DSM 265)).